The primary structure comprises 443 residues: 5-methylthioadenosine/S-adenosylhomocysteine deaminase 1 (443 aa).

Residues His-69 and His-71 each coordinate Zn(2+). 2 residues coordinate substrate: Glu-98 and His-191. Residue His-218 coordinates Zn(2+). Positions 221 and 306 each coordinate substrate. Asp-306 provides a ligand contact to Zn(2+).

This sequence belongs to the metallo-dependent hydrolases superfamily. MTA/SAH deaminase family. Requires Zn(2+) as cofactor.

It carries out the reaction S-adenosyl-L-homocysteine + H2O + H(+) = S-inosyl-L-homocysteine + NH4(+). The enzyme catalyses S-methyl-5'-thioadenosine + H2O + H(+) = S-methyl-5'-thioinosine + NH4(+). Functionally, catalyzes the deamination of 5-methylthioadenosine and S-adenosyl-L-homocysteine into 5-methylthioinosine and S-inosyl-L-homocysteine, respectively. Is also able to deaminate adenosine. The protein is 5-methylthioadenosine/S-adenosylhomocysteine deaminase 1 of Syntrophus aciditrophicus (strain SB).